Here is a 374-residue protein sequence, read N- to C-terminus: Resuscitation-promoting factor Rpf2 (374 aa).

Positions 1-40 are cleaved as a signal peptide; that stretch reads MAPHQKSRINRINSTRSVPLRLATGGVLATLLIGGVTAAA. A G5 domain is found at 210-290; the sequence is IDRVDNTEIT…PATISRGTKT (81 aa). Positions 228–252 are disordered; it reads PTYVDDPEAPAGDETVVEEGAPGTK.

It belongs to the transglycosylase family. Rpf subfamily. Post-translationally, glycosylated; by Pmt, by at least mannose and galactose. Other unidentified sugars may also be present. In terms of processing, may be subject to proteolytic cleavage as multiple shorter forms are detected in gels. At least 3 non-glycosylated protein isoforms of 35, 40 and 42 kDa are seen in gels.

It is found in the secreted. The protein resides in the cell surface. Factor that stimulates resuscitation of dormant cells. Has peptidoglycan (PG) hydrolytic activity. Active in the pM concentration range. Has little to no effect on actively-growing cells. PG fragments could either directly activate the resuscitation pathway of dormant bacteria or serve as a substrate for endogenous Rpf, resulting in low molecular weight products with resuscitation activity. The protein is Resuscitation-promoting factor Rpf2 (rpf2) of Corynebacterium glutamicum (strain ATCC 13032 / DSM 20300 / JCM 1318 / BCRC 11384 / CCUG 27702 / LMG 3730 / NBRC 12168 / NCIMB 10025 / NRRL B-2784 / 534).